The following is a 646-amino-acid chain: Galactofuranosyltransferase GlfT2 (646 aa).

UDP-alpha-D-galactofuranose-binding residues include Arg182, Gln211, Asn240, and Asp267. The Mn(2+) site is built by Asp267 and Asp269. Residue Asp384 is the Proton acceptor of the active site. His408 is a binding site for Mn(2+).

Belongs to the glycosyltransferase 2 family. Homotetramer. Mn(2+) is required as a cofactor. It depends on Mg(2+) as a cofactor.

It is found in the cell membrane. The enzyme catalyses beta-D-galactofuranosyl-(1-&gt;5)-beta-D-galactofuranosyl-(1-&gt;4)-alpha-L-rhamnosyl-(1-&gt;3)-N-acetyl-alpha-D-glucosaminyl-diphospho-trans,octa-cis-decaprenol + 28 UDP-alpha-D-galactofuranose = [beta-D-galactofuranosyl-(1-&gt;5)-beta-D-galactofuranosyl-(1-&gt;6)]14-beta-D-galactofuranosyl-(1-&gt;5)-beta-D-galactofuranosyl-(1-&gt;4)-alpha-L-rhamnopyranosyl-(1-&gt;3)-N-acetyl-alpha-D-glucosaminyl-diphospho-trans,octa-cis-decaprenol + 28 UDP + 28 H(+). Its pathway is cell wall biogenesis; cell wall polysaccharide biosynthesis. Its function is as follows. Involved in the galactan polymerization of the arabinogalactan (AG) region of the mycolylarabinogalactan-peptidoglycan (mAGP) complex, an essential component of the mycobacteria cell wall. Thus, successively transfers approximately 28 galactofuranosyl (Galf) residues from UDP-galactofuranose (UDP-Galf) onto the galactofuranosyl-galactofuranosyl-rhamnosyl-GlcNAc-diphospho-decaprenol (Galf-Galf-Rha-GlcNAc-PP-C50) acceptor produced by GlfT1, with alternating 1-&gt;5 and 1-&gt;6 links, forming a galactan domain with approximately 30 galactofuranosyl residues. This Mycolicibacterium smegmatis (strain ATCC 700084 / mc(2)155) (Mycobacterium smegmatis) protein is Galactofuranosyltransferase GlfT2.